A 251-amino-acid polypeptide reads, in one-letter code: Arginine and glutamate-rich protein 1-A (251 aa).

Positions 1–48 (MGRSRSRSSSRSKHSKHSRKRSRSKSKSKKRSRSKEPKRNRRSRSRSG) are enriched in basic residues. The tract at residues 1-53 (MGRSRSRSSSRSKHSKHSRKRSRSKSKSKKRSRSKEPKRNRRSRSRSGSRRDR) is necessary and sufficient for RNA binding. Disordered regions lie at residues 1 to 92 (MGRS…ERQR) and 215 to 251 (RMKL…KATE). Composition is skewed to basic and acidic residues over residues 49 to 63 (SRRD…RTDM), 71 to 92 (RNND…ERQR), and 215 to 231 (RMKL…EEQK). The segment at 54-251 (GGSPPDRTDM…RLSFSLKATE (198 aa)) is necessary and sufficient for transcriptional regulation.

This sequence belongs to the ARGLU1 family.

It localises to the nucleus. Its subcellular location is the nucleus speckle. The protein resides in the chromosome. Dual function regulator of gene expression; regulator of transcription and modulator of alternative splicing. General coactivator of nuclear receptor-induced gene expression. The polypeptide is Arginine and glutamate-rich protein 1-A (arglu1a) (Danio rerio (Zebrafish)).